The primary structure comprises 138 residues: ATP synthase epsilon chain (138 aa).

This sequence belongs to the ATPase epsilon chain family. In terms of assembly, F-type ATPases have 2 components, CF(1) - the catalytic core - and CF(0) - the membrane proton channel. CF(1) has five subunits: alpha(3), beta(3), gamma(1), delta(1), epsilon(1). CF(0) has three main subunits: a, b and c.

Its subcellular location is the cell inner membrane. Produces ATP from ADP in the presence of a proton gradient across the membrane. The sequence is that of ATP synthase epsilon chain from Bartonella quintana (strain Toulouse) (Rochalimaea quintana).